Reading from the N-terminus, the 578-residue chain is Thiol:disulfide interchange protein DsbD (578 aa).

The signal sequence occupies residues 1–24 (MAQRFITLILLLCSILLAPHSAQA). 2 cysteine pairs are disulfide-bonded: Cys134-Cys140 and Cys195-Cys317. 9 helical membrane passes run 183-203 (ALLI…YPLI), 219-239 (ILLL…LLGL), 256-276 (YVLI…FGLY), 297-317 (GGSL…CSPC), 318-338 (TTAP…MLAG), 339-359 (GGTL…VTLF), 370-390 (WMQY…VFLL), 397-417 (VWGL…AFIL), and 421-441 (AHSG…LIAA). The region spanning 438-578 (LIAARPLQDW…FLQHLQNLPR (141 aa)) is the Thioredoxin domain. A disulfide bridge connects residues Cys493 and Cys496.

It belongs to the thioredoxin family. DsbD subfamily.

The protein resides in the cell inner membrane. The enzyme catalyses [protein]-dithiol + NAD(+) = [protein]-disulfide + NADH + H(+). The catalysed reaction is [protein]-dithiol + NADP(+) = [protein]-disulfide + NADPH + H(+). In terms of biological role, required to facilitate the formation of correct disulfide bonds in some periplasmic proteins and for the assembly of the periplasmic c-type cytochromes. Acts by transferring electrons from cytoplasmic thioredoxin to the periplasm. This transfer involves a cascade of disulfide bond formation and reduction steps. This is Thiol:disulfide interchange protein DsbD from Yersinia enterocolitica serotype O:8 / biotype 1B (strain NCTC 13174 / 8081).